The primary structure comprises 290 residues: Pirin (290 aa).

Fe cation contacts are provided by His56, His58, His101, and Glu103.

The protein belongs to the pirin family. May interact with NF1/CTF1. Interacts with BCL3. Identified in a complex comprised of PIR, BLC3, NFKB1 and target DNA. Requires Fe cation as cofactor. As to expression, highly expressed in a subset of melanomas. Detected at very low levels in most tissues (at protein level). Expressed in all tissues, with highest level of expression in heart and liver.

The protein resides in the nucleus. The protein localises to the cytoplasm. It carries out the reaction quercetin + O2 = 2-(3,4-dihydroxybenzoyloxy)-4,6-dihydroxybenzoate + CO. It participates in flavonoid metabolism; quercetin degradation. Inhibited by kojic acid, sodium diethyldithiocarbamate and 1,10-phenanthroline monohydrochloride. In terms of biological role, transcriptional coregulator of NF-kappa-B which facilitates binding of NF-kappa-B proteins to target kappa-B genes in a redox-state-dependent manner. May be required for efficient terminal myeloid maturation of hematopoietic cells. Has quercetin 2,3-dioxygenase activity (in vitro). The protein is Pirin (PIR) of Homo sapiens (Human).